The primary structure comprises 943 residues: Nuclear factor of activated T-cells, cytoplasmic 1 (943 aa).

The tract at residues 22–48 (GRGETLGPAPRAGGTMKSAEEEHYGYA) is disordered. A calcineurin-binding region spans residues 118-123 (PRIEIT). The transactivation domain A (TAD-A) stretch occupies residues 126-218 (LGLYHNNNQF…CVSPKTTDPE (93 aa)). The segment at 200–298 (PQTSPWQSPC…GSPRVSVTDD (99 aa)) is disordered. The span at 201–214 (QTSPWQSPCVSPKT) shows a compositional bias: polar residues. 2 repeat units span residues 203-219 (SPWQ…DPEE) and 233-249 (SPRH…VTEE). The 3 X SP repeats stretch occupies residues 203-298 (SPWQSPCVSP…GSPRVSVTDD (96 aa)). A phosphoserine mark is found at Ser-233 and Ser-237. Positions 236–248 (HSPSTSPRASVTE) are enriched in polar residues. At Ser-245 the chain carries Phosphoserine; by PKA. The short motif at 265–267 (KRK) is the Nuclear localization signal element. Ser-269 bears the Phosphoserine; by PKA mark. The segment covering 276-288 (PYSPHHSPTPSPH) has biased composition (pro residues). The stretch at 282–298 (SPTPSPHGSPRVSVTDD) is repeat 3. Ser-294 carries the phosphoserine; by PKA modification. A Nuclear export signal motif is present at residues 310 to 321 (SAIVAAINALTT). The region spanning 410–592 (PTLPALDWQL…NPIECSQRSA (183 aa)) is the RHD domain. A DNA-binding region spans residues 439–446 (RAHYETEG). The short motif at 682 to 684 (KRK) is the Nuclear localization signal element. Residues 703–943 (TEPTDDYEPA…NDLSSTSTHS (241 aa)) are transactivation domain B (TAD-B). The interval 787–912 (HLGLPQPAGE…SPNLAPIPVT (126 aa)) is disordered. Residues 846–855 (SPSPPLPPAT) show a composition bias toward pro residues. A Nuclear export signal motif is present at residues 924-933 (YLDDVNEIIR).

As to quaternary structure, member of the multicomponent NFATC transcription complex that consists of at least two components, a pre-existing cytoplasmic component NFATC2 and an inducible nuclear component NFATC1. Other members such as NFATC4, NFATC3 or members of the activating protein-1 family, MAF, GATA4 and Cbp/p300 can also bind the complex. NFATC proteins bind to DNA as monomers. Interacts with HOMER2 and HOMER3; this interaction may compete with calcineurin/PPP3CA-binding and hence prevent NFATC1 dephosphorylation and activation. Interacts with TLE6/GRG6. Phosphorylated by NFATC-kinase and GSK3B; phosphorylation induces NFATC1 nuclear exit and dephosphorylation by calcineurin promotes nuclear import. Phosphorylation by PKA and DYRK2 negatively modulates nuclear accumulation, and promotes subsequent phosphorylation by GSK3B or casein kinase 1. Expressed in thymus, peripheral leukocytes as T-cells and spleen. Isoforms A are preferentially expressed in effector T-cells (thymus and peripheral leukocytes) whereas isoforms B and isoforms C are preferentially expressed in naive T-cells (spleen). Isoforms B are expressed in naive T-cells after first antigen exposure and isoforms A are expressed in effector T-cells after second antigen exposure. Isoforms IA are widely expressed but not detected in liver nor pancreas, neural expression is strongest in corpus callosum. Isoforms IB are expressed mostly in muscle, cerebellum, placenta and thymus, neural expression in fetal and adult brain, strongest in corpus callosum.

The protein resides in the cytoplasm. Its subcellular location is the nucleus. Functionally, plays a role in the inducible expression of cytokine genes in T-cells, especially in the induction of the IL-2 or IL-4 gene transcription. Also controls gene expression in embryonic cardiac cells. Could regulate not only the activation and proliferation but also the differentiation and programmed death of T-lymphocytes as well as lymphoid and non-lymphoid cells. Required for osteoclastogenesis and regulates many genes important for osteoclast differentiation and function. In Homo sapiens (Human), this protein is Nuclear factor of activated T-cells, cytoplasmic 1 (NFATC1).